Reading from the N-terminus, the 194-residue chain is Peptidyl-tRNA hydrolase (194 aa).

TRNA is bound at residue Y17. The Proton acceptor role is filled by H22. The tRNA site is built by Y68, N70, and N116.

This sequence belongs to the PTH family. Monomer.

The protein localises to the cytoplasm. The enzyme catalyses an N-acyl-L-alpha-aminoacyl-tRNA + H2O = an N-acyl-L-amino acid + a tRNA + H(+). Its function is as follows. Hydrolyzes ribosome-free peptidyl-tRNAs (with 1 or more amino acids incorporated), which drop off the ribosome during protein synthesis, or as a result of ribosome stalling. Functionally, catalyzes the release of premature peptidyl moieties from peptidyl-tRNA molecules trapped in stalled 50S ribosomal subunits, and thus maintains levels of free tRNAs and 50S ribosomes. This chain is Peptidyl-tRNA hydrolase, found in Chromohalobacter salexigens (strain ATCC BAA-138 / DSM 3043 / CIP 106854 / NCIMB 13768 / 1H11).